The following is a 476-amino-acid chain: Cytosolic iron-sulfur assembly component 3 (476 aa).

Ala-2 carries the post-translational modification N-acetylalanine. [4Fe-4S] cluster contacts are provided by Cys-24, Cys-71, Cys-74, Cys-77, Cys-190, and Cys-246. Residues 297–316 (DGLTSSVSAEEPSSHRGGGS) are disordered. [4Fe-4S] cluster is bound by residues Cys-395 and Cys-399.

This sequence belongs to the NARF family. In terms of assembly, external component of the CIA complex. In the CIA complex, interacts directly with CIAO1 and MMS19.

In terms of biological role, component of the cytosolic iron-sulfur protein assembly (CIA) complex, a multiprotein complex that mediates the incorporation of iron-sulfur cluster into extramitochondrial Fe/S proteins. Seems to negatively regulate the level of HIF1A expression, although this effect could be indirect. This Mus musculus (Mouse) protein is Cytosolic iron-sulfur assembly component 3 (Ciao3).